A 426-amino-acid polypeptide reads, in one-letter code: Trigger factor (426 aa).

One can recognise a PPIase FKBP-type domain in the interval 160–240 (GDTVIGDVTK…IKEVKHLELP (81 aa)).

Belongs to the FKBP-type PPIase family. Tig subfamily.

It localises to the cytoplasm. The catalysed reaction is [protein]-peptidylproline (omega=180) = [protein]-peptidylproline (omega=0). Its function is as follows. Involved in protein export. Acts as a chaperone by maintaining the newly synthesized protein in an open conformation. Functions as a peptidyl-prolyl cis-trans isomerase. In Chlorobaculum tepidum (strain ATCC 49652 / DSM 12025 / NBRC 103806 / TLS) (Chlorobium tepidum), this protein is Trigger factor.